A 357-amino-acid polypeptide reads, in one-letter code: Transcription factor PCF6 (357 aa).

Residues 1–29 (MEAAVGDGEGGGGGGGRGKRGRGGGGGEM) are disordered. Gly residues predominate over residues 7–16 (DGEGGGGGGG). Residues 52–110 (GKDRHSKVYTAKGIRDRRVRLSVATAIQFYDLQDRLGFDQPSKAIEWLINAASPAIDTL) form the TCP domain. 2 disordered regions span residues 125–162 (AADAAPTRRRSQQQQQQLSNKSGCSSTSETSKGSDKEV) and 281–307 (ANRGTLQSNSPSNMSGHHHHHHQQQLQ). Polar residues-rich tracts occupy residues 142-155 (LSNKSGCSSTSETS) and 284-295 (GTLQSNSPSNMS).

Forms homodimers and heterodimers.

Its subcellular location is the nucleus. In terms of biological role, transcription activator. Binds the promoter core sequence 5'-GGNCC-3'. The polypeptide is Transcription factor PCF6 (PCF6) (Oryza sativa subsp. japonica (Rice)).